A 194-amino-acid polypeptide reads, in one-letter code: DPY30 domain-containing protein 2 (194 aa).

Residues 126–172 (EAFEKEPLKQESLPGTSDMIPGMPQQSPSSEPSVSSQVDLNTGTPQE) form a disordered region. Positions 149 to 163 (PQQSPSSEPSVSSQV) are enriched in low complexity.

Belongs to the dpy-30 family.

This is DPY30 domain-containing protein 2 (DYDC2) from Bos taurus (Bovine).